We begin with the raw amino-acid sequence, 114 residues long: UPF0145 protein SSO1976 (114 aa).

Belongs to the UPF0145 family.

The protein is UPF0145 protein SSO1976 of Saccharolobus solfataricus (strain ATCC 35092 / DSM 1617 / JCM 11322 / P2) (Sulfolobus solfataricus).